The primary structure comprises 138 residues: Large ribosomal subunit protein bL19 (138 aa).

Belongs to the bacterial ribosomal protein bL19 family.

In terms of biological role, this protein is located at the 30S-50S ribosomal subunit interface and may play a role in the structure and function of the aminoacyl-tRNA binding site. The protein is Large ribosomal subunit protein bL19 of Leptospira interrogans serogroup Icterohaemorrhagiae serovar Lai (strain 56601).